Here is a 344-residue protein sequence, read N- to C-terminus: Golgi-associated RAB2 interactor protein 1B (344 aa).

It belongs to the GARIN family.

The protein localises to the golgi apparatus. In terms of biological role, RAB2B effector protein required for accurate acrosome formation and normal male fertility. In complex with RAB2A/RAB2B, seems to suppress excessive vesicle trafficking during acrosome formation. This is Golgi-associated RAB2 interactor protein 1B (Garin1b) from Rattus norvegicus (Rat).